Consider the following 353-residue polypeptide: MMTLKVCPSLLLLFLVHSVWTRTVRQVYNELDPEHWSHYTFECPQECFCPPSFPNALYCDNKGLKEIPAIPARIWYLYLQNNLIETISEKPFVNATHLRWINLNKNKITNNGIESGVLSKLKRLLYLFLEDNELEEVPAPLPVGLEQLRLARNKISRIPEGVFSNLENLTMLDLHQNNLLDSALQSDTFQGLNSLMQLNIAKNSLKKMPLSIPANTLQLFLDNNSIEVIPENYFSAIPKVTFLRLNYNKLSDEGIPPNGFNVSSILDLQLSHNQLTKIPPINAHLEHLHLDHNRIKSVNGTQICPVSIAVAEDYGLYGNIPRLRYLRLDGNEIQPPIPLDIMICFQLLQAVVI.

A signal peptide spans 1-21; the sequence is MMTLKVCPSLLLLFLVHSVWT. Positions 34-72 constitute an LRRNT domain; it reads EHWSHYTFECPQECFCPPSFPNALYCDNKGLKEIPAIPA. Intrachain disulfides connect C43–C49 and C47–C59. 8 LRR repeats span residues 73-94, 97-118, 123-143, 144-165, 168-188, 194-214, 215-236, and 239-259; these read RIWY…PFVN, HLRW…SGVL, RLLY…PLPV, GLEQ…VFSN, NLTM…QSDT, SLMQ…SIPA, NTLQ…YFSA, and KVTF…PPNG. N94 carries N-linked (GlcNAc...) (keratan sulfate) asparagine glycosylation. The N-linked (GlcNAc...) asparagine glycan is linked to N168. Residue N223 is glycosylated (N-linked (GlcNAc...) (keratan sulfate) asparagine). The N-linked (GlcNAc...) (keratan sulfate) asparagine glycan is linked to N261. LRR repeat units follow at residues 264–283 and 284–305; these read SILD…PINA and HLEH…QICP. The N-linked (GlcNAc...) asparagine glycan is linked to N299. C304 and C344 are disulfide-bonded.

This sequence belongs to the small leucine-rich proteoglycan (SLRP) family. SLRP class II subfamily. As to expression, cornea.

Its subcellular location is the secreted. The protein resides in the extracellular space. It is found in the extracellular matrix. In terms of biological role, plays an important role in generating and maintaining a transparent matrix within the corneal stroma. The polypeptide is Keratocan (KERA) (Coturnix japonica (Japanese quail)).